The chain runs to 565 residues: Ubiquitin carboxyl-terminal hydrolase 21 (565 aa).

The segment covering 1–14 (MPQASEHRLGRTRE) has biased composition (basic and acidic residues). Residues 1–103 (MPQASEHRLG…PPPTVALPLP (103 aa)) form a disordered region. The segment covering 48 to 57 (MLRPLPPRPG) has biased composition (pro residues). A compositionally biased stretch (basic and acidic residues) spans 58–70 (LPDERLKKLELGR). The Nuclear export signal motif lies at 134–152 (ELGAALSRLALRPEPPTLR). Positions 212–558 (VGLRNLGNTC…EGYVLFYQLM (347 aa)) constitute a USP domain. Cys221 serves as the catalytic Nucleophile. Residues Cys384, Cys387, Cys437, and Cys440 each coordinate Zn(2+). Residue His518 is the Proton acceptor of the active site.

The protein belongs to the peptidase C19 family. USP21 subfamily. As to quaternary structure, interacts with BEND3. In terms of tissue distribution, highly expressed in heart, pancreas and skeletal muscle. Also expressed in brain, placenta, liver and kidney, and at very low level in lung.

The protein resides in the cytoplasm. It localises to the nucleus. The enzyme catalyses Thiol-dependent hydrolysis of ester, thioester, amide, peptide and isopeptide bonds formed by the C-terminal Gly of ubiquitin (a 76-residue protein attached to proteins as an intracellular targeting signal).. Functionally, deubiquitinates histone H2A, a specific tag for epigenetic transcriptional repression, thereby acting as a coactivator. Deubiquitination of histone H2A releaves the repression of di- and trimethylation of histone H3 at 'Lys-4', resulting in regulation of transcriptional initiation. Regulates gene expression via histone H2A deubiquitination. Deubiquitinates BAZ2A/TIP5 leading to its stabilization. Also capable of removing NEDD8 from NEDD8 conjugates but has no effect on Sentrin-1 conjugates. Also acts as a negative regulator of the ribosome quality control (RQC) by mediating deubiquitination of 40S ribosomal proteins RPS10/eS10 and RPS20/uS10, thereby antagonizing ZNF598-mediated 40S ubiquitination. This is Ubiquitin carboxyl-terminal hydrolase 21 from Homo sapiens (Human).